We begin with the raw amino-acid sequence, 186 residues long: ATP synthase subunit delta (186 aa).

Belongs to the ATPase delta chain family. As to quaternary structure, F-type ATPases have 2 components, F(1) - the catalytic core - and F(0) - the membrane proton channel. F(1) has five subunits: alpha(3), beta(3), gamma(1), delta(1), epsilon(1). F(0) has three main subunits: a(1), b(2) and c(10-14). The alpha and beta chains form an alternating ring which encloses part of the gamma chain. F(1) is attached to F(0) by a central stalk formed by the gamma and epsilon chains, while a peripheral stalk is formed by the delta and b chains.

It is found in the cell inner membrane. Functionally, f(1)F(0) ATP synthase produces ATP from ADP in the presence of a proton or sodium gradient. F-type ATPases consist of two structural domains, F(1) containing the extramembraneous catalytic core and F(0) containing the membrane proton channel, linked together by a central stalk and a peripheral stalk. During catalysis, ATP synthesis in the catalytic domain of F(1) is coupled via a rotary mechanism of the central stalk subunits to proton translocation. This protein is part of the stalk that links CF(0) to CF(1). It either transmits conformational changes from CF(0) to CF(1) or is implicated in proton conduction. The protein is ATP synthase subunit delta of Leptospira borgpetersenii serovar Hardjo-bovis (strain JB197).